Here is an 873-residue protein sequence, read N- to C-terminus: MSSRSSKYMYKSSGGAGDISIEYGTDLGALTRLEDKLRLLQEDLESERELRQRIEREKSDLTVQLMQLSDRLEEAEGSSETVVEMNKKRDTELSKLRKLLEDVHLESEETAHHLRKKHQEAVAEMQEQMDLMTKAKSKAEKERQKFQAEVYELLAQVENTNKEKITIQKTVEKLEHTVYELNIRIEELNRTVTEVTAQRTRLSAENAEYLKEVHELKVSLDNVNHLKSQLATQLEDTRRRLEDEERKRASLESSMHTLEVEIESLKVQLEEESEARLEVERQLVKANADAAAYKTKYETEVQAHADEVEELRRKMAQKISEYEEQLEALLTRCSNLEKQKSRLQSEVEVLIMDLEKATAHAQNLEKRVAQLEKLNIDLKSKVEELTILLEQSQRELRQKVAEIQKLQHEYEKMREQRDALQRENKKLVDDLSEAKSQLADAIRRLHEYELEIKRLENERDELAAAYKEAETLRKQEEAKCQRLTAELAQVRHEYERRLQIKEEEIEALRKQYQLEVEQLNMRLAEAEAKLKTEIARIKKKYQAQITELEMSLDAANKQNMDLQKIIKKQAIQITELQAHYDEVHRQLQQCADQLAISQRRCQGLQAELDEQRVALESALRSKRAAEQSLEESQARVNELTTINVNIAAAKNKLESELSALQADYDELHKELRVVDERCQRTIVELKSTKDILVEEQERYIKVESIKKSLEVEVRNLQVRLEEVEANALAGGKRVIAKLEARIRDVEIELEEEKKRHAETQKILRKKDHRAKELLLQTEEDHKTITMLNDAVEKLNEKVKVYKRQLNEQEGLSQQNLTRVRRFQRELEAAEDRADSAESNLSLIRAKHRSWVTTSQVPGGTRQVFVTEESSQNF.

A nonhelical region region spans residues 1-25 (MSSRSSKYMYKSSGGAGDISIEYGT). The stretch at 26–852 (DLGALTRLED…IRAKHRSWVT (827 aa)) forms a coiled coil. Positions 853–873 (TSQVPGGTRQVFVTEESSQNF) are nonhelical region.

Belongs to the paramyosin family. Homodimer. Binds IgG and collagen. Expressed in all tissues except in saliva.

The protein localises to the cytoplasm. The protein resides in the myofibril. Paramyosin is a major structural component of many thick filaments isolated from invertebrate muscles. The sequence is that of Paramyosin (PRM) from Rhipicephalus microplus (Cattle tick).